The primary structure comprises 246 residues: UPF0309 protein ABC0887 (246 aa).

One can recognise an SIS domain in the interval 33-212 (MVHAIKEGKS…VLKMIEQLEE (180 aa)).

Belongs to the UPF0309 family.

The chain is UPF0309 protein ABC0887 from Shouchella clausii (strain KSM-K16) (Alkalihalobacillus clausii).